The sequence spans 142 residues: Large ribosomal subunit protein uL13 (142 aa).

It belongs to the universal ribosomal protein uL13 family. In terms of assembly, part of the 50S ribosomal subunit.

Functionally, this protein is one of the early assembly proteins of the 50S ribosomal subunit, although it is not seen to bind rRNA by itself. It is important during the early stages of 50S assembly. This is Large ribosomal subunit protein uL13 from Vibrio campbellii (strain ATCC BAA-1116).